A 214-amino-acid chain; its full sequence is Putative nickel/cobalt efflux system MJ1092 (214 aa).

A run of 6 helical transmembrane segments spans residues 2–22, 46–66, 79–99, 116–136, 149–169, and 188–208; these read VMIMELLYAITAFILGMLHAL, ILLGTTITISHTAVIFLLGIL, VHDMMSVVGGLILIAVGIWII, VITLGLSAGLVPCPAALAVLL, IYVAIFSIGLAISLTGLAVAF, and LPLISGSIIILIGLYTIAHPI.

Belongs to the NiCoT transporter (TC 2.A.52) family.

The protein localises to the cell membrane. Functionally, efflux system for nickel and cobalt. The chain is Putative nickel/cobalt efflux system MJ1092 from Methanocaldococcus jannaschii (strain ATCC 43067 / DSM 2661 / JAL-1 / JCM 10045 / NBRC 100440) (Methanococcus jannaschii).